A 207-amino-acid chain; its full sequence is 23 kDa calcium-binding protein (207 aa).

Blocked amino end (Met) is present on Met-1. EF-hand domains are found at residues 17-52 (AKLD…TFEN), 60-95 (VTAD…CLKK), 119-154 (MKLD…TYKQ), and 161-196 (PTEA…GLKK). Residues Asp-30, Asn-32, Asn-34, Thr-36, Glu-41, Asp-73, Asp-75, Asn-77, Glu-84, Asp-132, Asp-134, Ser-136, Gln-138, Glu-143, Asp-174, Asp-176, Asn-178, Thr-180, and Glu-185 each coordinate Ca(2+).

Its function is as follows. Expected to play a crucial role in calcium-dependent regulation of ciliary movement. The polypeptide is 23 kDa calcium-binding protein (Tetrahymena thermophila).